Consider the following 604-residue polypeptide: Glutamine--fructose-6-phosphate aminotransferase [isomerizing] (604 aa).

Cysteine 2 serves as the catalytic Nucleophile; for GATase activity. A Glutamine amidotransferase type-2 domain is found at 2–216 (CGIVGYVGFR…DGDVVRLTRE (215 aa)). 2 SIS domains span residues 281–420 (LALD…GRGA) and 453–594 (VAEK…VDQP). The For Fru-6P isomerization activity role is filled by lysine 599.

Homodimer.

It localises to the cytoplasm. The enzyme catalyses D-fructose 6-phosphate + L-glutamine = D-glucosamine 6-phosphate + L-glutamate. In terms of biological role, catalyzes the first step in hexosamine metabolism, converting fructose-6P into glucosamine-6P using glutamine as a nitrogen source. This is Glutamine--fructose-6-phosphate aminotransferase [isomerizing] from Thermus thermophilus (strain ATCC 27634 / DSM 579 / HB8).